The following is a 506-amino-acid chain: Lysine--tRNA ligase (506 aa).

Mg(2+) is bound by residues glutamate 416 and glutamate 423.

The protein belongs to the class-II aminoacyl-tRNA synthetase family. As to quaternary structure, homodimer. The cofactor is Mg(2+).

It is found in the cytoplasm. It catalyses the reaction tRNA(Lys) + L-lysine + ATP = L-lysyl-tRNA(Lys) + AMP + diphosphate. This chain is Lysine--tRNA ligase, found in Bordetella parapertussis (strain 12822 / ATCC BAA-587 / NCTC 13253).